The primary structure comprises 252 residues: MFS-type transporter cctQ (252 aa).

The next 2 membrane-spanning stretches (helical) occupy residues 54-74 and 116-136; these read IGSL…VVLP and FGSF…IVGF. Asn179 carries N-linked (GlcNAc...) asparagine glycosylation. The next 2 membrane-spanning stretches (helical) occupy residues 180 to 200 and 208 to 228; these read FSIC…WILA and FLVW…YFTT.

Belongs to the major facilitator superfamily.

The protein resides in the membrane. Its pathway is mycotoxin biosynthesis. MFS-type transporter; part of the gene cluster that mediates the biosynthesis of the mycotoxin cyclochlorotine, a hepatotoxic and carcinogenic cyclic chlorinated pentapeptide. Most likely responsible for cyclochlorotine secretion and thereby may contribute to intrinsic resistance. The protein is MFS-type transporter cctQ of Talaromyces islandicus (Penicillium islandicum).